The primary structure comprises 894 residues: LRR receptor-like serine/threonine-protein kinase IOS1 (894 aa).

The first 23 residues, 1-23 (MAFSSCFLLVLLQIFSALLLCLA), serve as a signal peptide directing secretion. The Extracellular portion of the chain corresponds to 24–515 (QDQSGFISLD…KKKKNTVIAP (492 aa)). N-linked (GlcNAc...) asparagine glycans are attached at residues N48, N95, N137, N179, N223, N230, N260, N287, N309, N338, N399, N441, N462, and N469. LRR repeat units lie at residues 431–457 (LTSLEVLDLSNNSLTGSVPEFLANMET) and 459–479 (KLINLSGNELNGSIPATLLDK). A helical transmembrane segment spans residues 516 to 536 (VAASLVSVFLIGAGIVTFLIL). Topologically, residues 537–894 (KRKKRTKLGL…FTTELNPGAR (358 aa)) are cytoplasmic. A Phosphothreonine modification is found at T577. Residues 586–858 (NNFERVLGRG…QVVMDLKECL (273 aa)) form the Protein kinase domain. ATP is bound by residues 592–600 (LGRGGFGVV) and K613. The residue at position 658 (Y658) is a Phosphotyrosine. D710 functions as the Proton acceptor in the catalytic mechanism. At S744 the chain carries Phosphoserine. Phosphothreonine occurs at positions 745 and 750. Position 758 is a phosphotyrosine (Y758).

The protein belongs to the protein kinase superfamily. Ser/Thr protein kinase family. As to quaternary structure, homodimerization. Interacts with BAK1 and FLS2; triggers FLS2-BAK1 complex formation upon microbe-associated molecular patterns (MAMPs) treatment. Also binds to CERK1 and EFR. Expressed in roots, cotyledons, leaves, flowers and siliques.

It is found in the cell membrane. Functionally, negatively regulates the abscisic acid (ABA) signaling pathway. Required for full susceptibility to filamentous (hemi)biotrophic oomycetes (e.g. H.arabidopsidis and P.parasitica) and fungal (e.g. E.cruciferarum) pathogens, probably by triggering the repression of ABA-sensitive COLD REGULATED and RESISTANCE TO DESICCATION genes during infection, but independently of immune responses. Involved in BAK1-dependent and BAK1-independent microbe-associated molecular patterns (MAMPs)-triggered immunity (PTI) leading to defense responses, including callose deposition and MAPK cascade activation, toward pathogenic bacteria (e.g. P.syringae). Required for chitin-mediated PTI. The chain is LRR receptor-like serine/threonine-protein kinase IOS1 from Arabidopsis thaliana (Mouse-ear cress).